Here is a 490-residue protein sequence, read N- to C-terminus: GTPase Der (490 aa).

EngA-type G domains are found at residues 3–166 (PVVA…MEDL) and 203–376 (IKLA…DSST). Residues 9-16 (GRPNVGKS), 56-60 (DTGGI), 118-121 (NKTD), 209-216 (GRPNVGKS), 256-260 (DTAGV), and 321-324 (NKWD) contribute to the GTP site. One can recognise a KH-like domain in the interval 377–461 (RRVGTSMLTR…PIRIQFKEGE (85 aa)).

The protein belongs to the TRAFAC class TrmE-Era-EngA-EngB-Septin-like GTPase superfamily. EngA (Der) GTPase family. In terms of assembly, associates with the 50S ribosomal subunit.

GTPase that plays an essential role in the late steps of ribosome biogenesis. This chain is GTPase Der, found in Escherichia fergusonii (strain ATCC 35469 / DSM 13698 / CCUG 18766 / IAM 14443 / JCM 21226 / LMG 7866 / NBRC 102419 / NCTC 12128 / CDC 0568-73).